A 744-amino-acid chain; its full sequence is Polyribonucleotide nucleotidyltransferase (744 aa).

The Mg(2+) site is built by Asp515 and Asp521. The region spanning 581 to 640 (PRVITVQVPVDKIGEVIGPKGKMINQIQDDTGADISIEDDGTVFIGATDGPSAEAARQAI) is the KH domain. Positions 652 to 724 (GERFVGTVVK…PRGKLSLHAV (73 aa)) constitute an S1 motif domain.

It belongs to the polyribonucleotide nucleotidyltransferase family. It depends on Mg(2+) as a cofactor.

The protein resides in the cytoplasm. The catalysed reaction is RNA(n+1) + phosphate = RNA(n) + a ribonucleoside 5'-diphosphate. Involved in mRNA degradation. Catalyzes the phosphorolysis of single-stranded polyribonucleotides processively in the 3'- to 5'-direction. This chain is Polyribonucleotide nucleotidyltransferase, found in Beutenbergia cavernae (strain ATCC BAA-8 / DSM 12333 / CCUG 43141 / JCM 11478 / NBRC 16432 / NCIMB 13614 / HKI 0122).